We begin with the raw amino-acid sequence, 27 residues long: Defensin-like protein 1 (27 aa).

Q1 carries the post-translational modification Pyrrolidone carboxylic acid.

It belongs to the DEFL family. In terms of assembly, forms oligomers in its native state.

Its function is as follows. Possesses antifungal activity sensitive to inorganic cations. The protein is Defensin-like protein 1 of Brassica campestris (Field mustard).